The sequence spans 1019 residues: DNA topoisomerase 1 (1019 aa).

The interval 1–160 is disordered; that stretch reads MNSIQVKNEP…KTMSITGSGE (160 aa). Basic and acidic residues predominate over residues 46–56; sequence KPLAKRPKVED. A compositionally biased stretch (polar residues) spans 62–78; sequence PLTSTVSSQNGVQKRSG. 2 stretches are compositionally biased toward acidic residues: residues 83-93 and 107-136; these read DDNDDDSDSDS and SDDD…DDDD. 3 interaction with DNA regions span residues 379–380, 442–447, and 556–558; these read KY, RAGNEK, and SAK. The Topo IB-type catalytic domain occupies 386 to 860; sequence TSNFKTNSDR…KKVKKEEEEN (475 aa). Residues 716-737 form a disordered region; it reads EQKGLTGDDGTPKKGKKAKNVE. The active-site O-(3'-phospho-DNA)-tyrosine intermediate is the tyrosine 822. Disordered regions lie at residues 843–890 and 940–1019; these read GQGK…TGDS and MRKL…AAVV. A compositionally biased stretch (basic and acidic residues) spans 854 to 863; sequence KKEEEENDIK. The segment covering 864 to 879 has biased composition (basic residues); it reads PKKKDAKGAASKKRAA. Composition is skewed to basic and acidic residues over residues 940 to 950 and 980 to 996; these read MRKLDSAERKG and TSAD…VDKT. The span at 997–1012 shows a compositional bias: acidic residues; sequence EESDDDLSSDSSDDED.

It belongs to the type IB topoisomerase family. In terms of assembly, monomer.

The catalysed reaction is ATP-independent breakage of single-stranded DNA, followed by passage and rejoining.. In terms of biological role, releases the supercoiling and torsional tension of DNA introduced during the DNA replication and transcription by transiently cleaving and rejoining one strand of the DNA duplex. Introduces a single-strand break via transesterification at a target site in duplex DNA. The scissile phosphodiester is attacked by the catalytic tyrosine of the enzyme, resulting in the formation of a DNA-(3'-phosphotyrosyl)-enzyme intermediate and the expulsion of a 5'-OH DNA strand. The free DNA strand then rotates around the intact phosphodiester bond on the opposing strand, thus removing DNA supercoils. Finally, in the religation step, the DNA 5'-OH attacks the covalent intermediate to expel the active-site tyrosine and restore the DNA phosphodiester backbone. In Mycosarcoma maydis (Corn smut fungus), this protein is DNA topoisomerase 1 (TOP1).